Here is a 695-residue protein sequence, read N- to C-terminus: Phosphate acetyltransferase (695 aa).

Residues 372–695 (AFRYRLVKRA…LTAVQAASQR (324 aa)) form a phosphate acetyltransferase region.

The protein in the N-terminal section; belongs to the CobB/CobQ family. This sequence in the C-terminal section; belongs to the phosphate acetyltransferase and butyryltransferase family. In terms of assembly, homohexamer.

The protein localises to the cytoplasm. It catalyses the reaction acetyl-CoA + phosphate = acetyl phosphate + CoA. Its pathway is metabolic intermediate biosynthesis; acetyl-CoA biosynthesis; acetyl-CoA from acetate: step 2/2. In terms of biological role, involved in acetate metabolism. The chain is Phosphate acetyltransferase (pta) from Nitrosomonas europaea (strain ATCC 19718 / CIP 103999 / KCTC 2705 / NBRC 14298).